Here is a 509-residue protein sequence, read N- to C-terminus: Tyrosine-protein kinase Lck (509 aa).

The N-myristoyl glycine moiety is linked to residue G2. Positions G2–Y72 are interactions with CD4 and CD8. Residues C3 and C5 are each lipidated (S-palmitoyl cysteine). One can recognise an SH3 domain in the interval L61–S121. K99 is covalently cross-linked (Glycyl lysine isopeptide (Lys-Gly) (interchain with G-Cter in ubiquitin)). At S102 the chain carries Phosphoserine. An SH2 domain is found at W127–C224. An interaction with PTPRH region spans residues R154 to R242. At T159 the chain carries Phosphothreonine. At S162 the chain carries Phosphoserine. The residue at position 192 (Y192) is a Phosphotyrosine. S194 carries the phosphoserine modification. The 254-residue stretch at L245–F498 folds into the Protein kinase domain. ATP-binding positions include L251–V259 and K273. A Glycyl lysine isopeptide (Lys-Gly) (interchain with G-Cter in ubiquitin) cross-link involves residue K276. Catalysis depends on D364, which acts as the Proton acceptor. Y394 bears the Phosphotyrosine; by autocatalysis mark. Position 505 is a phosphotyrosine; by CSK (Y505).

Belongs to the protein kinase superfamily. Tyr protein kinase family. SRC subfamily. In terms of assembly, binds to the cytoplasmic domain of cell surface receptors, such as AXL, CD2, CD4, CD5, CD8, CD44, CD45 and CD122. Also binds to effector molecules, such as PI4K, VAV1, RASA1, FYB1 and to other protein kinases including CDK1, RAF1, ZAP70 and SYK. Binds to phosphatidylinositol 3'-kinase (PI3K) from T-lymphocytes through its SH3 domain and to the tyrosine phosphorylated form of KHDRBS1/p70 through its SH2 domain. This interaction inhibits its tyrosine-kinase activity. Interacts with SQSTM1. Interacts with phosphorylated LIME1. Interacts with CBLB and PTPRH. Interacts with RUNX3. Forms a signaling complex with EPHA1, PTK2B and PI3-KINASE; upon activation by EFNA1 which may regulate T-lymphocyte migration. Associates with ZAP70 and RHOH; these interactions allow LCK-mediated RHOH and CD3 subunit phosphorylation in the presence of functional ZAP70. Interacts with UNC119; this interaction plays a crucial role in activation of LCK. Interacts with CEACAM1 (via cytoplasmic domain); mediates CEACAM1 phosphorylation resulting in PTPN6 recruitment that dephosphorylates TCR stimulation-induced CD247 and ZAP70. Interacts with CD160. Interacts with CD48. (Microbial infection) Interacts with herpes simplex virus 1 UL46; this interaction activates LCK. As to quaternary structure, (Microbial infection) Interacts with HIV-1 Nef through its SH3 domain. In terms of processing, autophosphorylated on Tyr-394, increasing enzymatic activity, this site is dephosphorylated by PTN22. Phosphorylated on Tyr-505 by CSK, decreasing activity. Dephosphorylated by PTPRC/CD45. Dephosphorylation at Tyr-394 by PTPN2 negatively regulates T-cell receptor signaling. Dephosphorylation at Tyr-394 by DUSP22 negatively regulates T-cell receptor signaling. Post-translationally, myristoylation is required prior to palmitoylation. Palmitoylation regulates association with the plasma membrane and could be mediated by ZDHHC2. In terms of processing, 'Lys-63'-linked ubiquitinated at Lys-99 and Lys-276 by UBR2; this modification is required for autophosphorylation at Tyr-394. In terms of tissue distribution, expressed specifically in lymphoid cells.

It is found in the cell membrane. The protein resides in the cytoplasm. It localises to the cytosol. It carries out the reaction L-tyrosyl-[protein] + ATP = O-phospho-L-tyrosyl-[protein] + ADP + H(+). The relative activities of the inhibitory tyrosine-protein kinase CSK and the activating tyrosine-protein phosphatase PTPRC/CD45 determine the level of LCK activity. These interactions allow rapid and efficient activation of LCK in response to TCR stimulation. In terms of biological role, non-receptor tyrosine-protein kinase that plays an essential role in the selection and maturation of developing T-cells in the thymus and in the function of mature T-cells. Plays a key role in T-cell antigen receptor (TCR)-linked signal transduction pathways. Constitutively associated with the cytoplasmic portions of the CD4 and CD8 surface receptors. Association of the TCR with a peptide antigen-bound MHC complex facilitates the interaction of CD4 and CD8 with MHC class II and class I molecules, respectively, thereby recruiting the associated LCK protein to the vicinity of the TCR/CD3 complex. LCK then phosphorylates tyrosine residues within the immunoreceptor tyrosine-based activation motifs (ITAM) of the cytoplasmic tails of the TCR-gamma chains and CD3 subunits, initiating the TCR/CD3 signaling pathway. Once stimulated, the TCR recruits the tyrosine kinase ZAP70, that becomes phosphorylated and activated by LCK. Following this, a large number of signaling molecules are recruited, ultimately leading to lymphokine production. LCK also contributes to signaling by other receptor molecules. Associates directly with the cytoplasmic tail of CD2, which leads to hyperphosphorylation and activation of LCK. Also plays a role in the IL2 receptor-linked signaling pathway that controls the T-cell proliferative response. Binding of IL2 to its receptor results in increased activity of LCK. Is expressed at all stages of thymocyte development and is required for the regulation of maturation events that are governed by both pre-TCR and mature alpha beta TCR. Phosphorylates other substrates including RUNX3, PTK2B/PYK2, the microtubule-associated protein MAPT, RHOH or TYROBP. Interacts with FYB2. The polypeptide is Tyrosine-protein kinase Lck (LCK) (Homo sapiens (Human)).